A 594-amino-acid chain; its full sequence is Serine/threonine-protein kinase UL13 homolog (594 aa).

Disordered regions lie at residues 1 to 105 (MARS…TSQC) and 128 to 183 (ECDA…VGGR). A compositionally biased stretch (basic residues) spans 38–47 (RPKKSTRGRS). The Protein kinase domain occupies 223-594 (GEIPKFGGAG…SIPLLWTPRP (372 aa)). Residues 229-237 (GGAGSYGEV) and Lys248 contribute to the ATP site. Residue Asp349 is the Proton acceptor of the active site.

The protein belongs to the protein kinase superfamily. Ser/Thr protein kinase family. Post-translationally, autophosphorylated.

The protein localises to the virion tegument. It is found in the host nucleus. The enzyme catalyses L-seryl-[protein] + ATP = O-phospho-L-seryl-[protein] + ADP + H(+). It catalyses the reaction L-threonyl-[protein] + ATP = O-phospho-L-threonyl-[protein] + ADP + H(+). In terms of biological role, multifunctional serine/threonine kinase that plays a role in several processes including egress of virus particles from the nucleus, modulation of the actin cytoskeleton and regulation of viral and cellular gene expression. Regulates the nuclear localization of viral envelopment factors UL34 and UL31 homologs, by phosphorylating the US3 kinase homolog, indicating a role in nuclear egress. Disrupts host nuclear lamins, including LMNA and LMNB1. Phosphorylates the viral Fc receptor composed of glycoproteins E (gE) and I (gI). Phosphorylation of glycoprotein E (gE) by UL13 homolog alters its subcellular localization, from the host early endosome to the plasma membrane. Participates in the transcriptional regulation of cellular and viral mRNAs mainly by phosphorylating the viral transcriptional regulator ICP22 homolog. The sequence is that of Serine/threonine-protein kinase UL13 homolog from Equus caballus (Horse).